The following is a 747-amino-acid chain: Mitochondrial inner membrane i-AAA protease supercomplex subunit YME1 (747 aa).

Over residues 51 to 64 the composition is skewed to basic and acidic residues; the sequence is KNSGEMPPKKEADS. Residues 51 to 92 form a disordered region; that stretch reads KNSGEMPPKKEADSSGKASNKSTISSIDNSQPPPPSNTNDKT. Residues 66-80 are compositionally biased toward polar residues; that stretch reads GKASNKSTISSIDNS. 321–328 serves as a coordination point for ATP; it reads GPPGTGKT. H540 contacts Zn(2+). E541 is an active-site residue. Residues H544 and D618 each contribute to the Zn(2+) site. A disordered region spans residues 718 to 747; sequence STNTVVEGPDSDERKDIGDDKPKIPTMLNA. Positions 728–740 are enriched in basic and acidic residues; sequence SDERKDIGDDKPK.

It in the N-terminal section; belongs to the AAA ATPase family. This sequence in the C-terminal section; belongs to the peptidase M41 family. Component of the mitochondrial inner membrane i-AAA protease supercomplex composed of MGR1, MGR3 and YME1. Interacts directly with MGR1. Requires Zn(2+) as cofactor.

The protein localises to the mitochondrion inner membrane. Catalytic subunit of the mitochondrial inner membrane i-AAA protease supercomplex required for mitochondrial inner membrane protein turnover. The protease is probably ATP-dependent. Important to maintain the integrity of the mitochondrial compartment. Required both for the degradation of unassembled subunit 2 of cytochrome c oxidase (COX2) and for efficient assembly of mitochondrial respiratory chain. Binds unfolded substrates in an ATPase-independent manner; binding of folded COX2, a physiological substrate, requires an active ATPase but when COX2 is destabilized an active ATPase is no longer necessary. May process ATG32. This Saccharomyces cerevisiae (strain ATCC 204508 / S288c) (Baker's yeast) protein is Mitochondrial inner membrane i-AAA protease supercomplex subunit YME1 (YME1).